The following is a 533-amino-acid chain: Beta-xylosidase (533 aa).

Catalysis depends on Asp14, which acts as the Proton acceptor. The Proton donor role is filled by Glu186.

The protein belongs to the glycosyl hydrolase 43 family. As to quaternary structure, homodimer.

It is found in the cell membrane. It carries out the reaction Hydrolysis of (1-&gt;4)-beta-D-xylans, to remove successive D-xylose residues from the non-reducing termini.. This is Beta-xylosidase (xynB) from Bacillus subtilis (strain 168).